We begin with the raw amino-acid sequence, 111 residues long: Probable 4-amino-4-deoxy-L-arabinose-phosphoundecaprenol flippase subunit ArnE (111 aa).

3 consecutive transmembrane segments (helical) span residues 38–58 (LWLG…LLVL), 61–81 (LPVG…TLAA), and 91–111 (PRHW…GSAA). An EamA domain is found at 40-109 (LGLALICMGA…IISGIIILGS (70 aa)).

The protein belongs to the ArnE family. Heterodimer of ArnE and ArnF.

The protein localises to the cell inner membrane. It functions in the pathway bacterial outer membrane biogenesis; lipopolysaccharide biosynthesis. Its function is as follows. Translocates 4-amino-4-deoxy-L-arabinose-phosphoundecaprenol (alpha-L-Ara4N-phosphoundecaprenol) from the cytoplasmic to the periplasmic side of the inner membrane. This Salmonella heidelberg (strain SL476) protein is Probable 4-amino-4-deoxy-L-arabinose-phosphoundecaprenol flippase subunit ArnE.